A 723-amino-acid chain; its full sequence is MQSAINLNIGGLLQNTGLLRNSRNGINRKPLDIEATAASLSRVYHQVWRQFSSDTSSPVTINQMNNILRDSTLSRRIARKSEISLNYDDAVVRIIPASSSFYIQRRGFRTRKQTFGVGNAGKPTQDEVKSPLTYFSELLAGKKQKTSEGGVEKWNQYESDLKKLPENQQRTYTDGFVKGLLSNGVSGAGKDGKKSNTLTRFYIFLVFCIFFGYLTGRIRVRVGDRQIGSLFFSNPQEVNPEDVQVTFDDVRGMDEAKLEVEEIVDYLKDPEKYSRLGGRLPKGVLLVGPPGTGKTLLARAIAGEAQVPFFHTAGSEFDEVLVGQGARRVRDLFDKAKARAPCIIFIDEIDSVGSKRVSNSIHPYANQTINQLLSEMDGFTRNEGIIVIAATNRVDDLDKALLRPGRFDVRVTVPKPDLAGRVDIFNFYLSKIVHSGGIDPKVLAKGSTGFTGADIENMVNQAALKAATDNAVEVTMAYLDEARDRVLMGPARTGGRIPDEEANRNTAYHEAGHTLVSLYTKDATPLHKVTIIPRGQSLGHTAMLPEKDSYQLTKAQMLATLDVMMGGRVAEELIFGDDKVTTGAADDLSKATQLAVQMVKVFGMSDKVGLRDFTAQDNESALVKVSDLAPQTAELIDAEINRVLQESYKRAKVILETKKKEHQLLAEALLEYETLSADEVKRVISGQKIKRPTPAAVKKSNETKRNQPSLVLHLFEEEGRGKQ.

Residues 198–220 traverse the membrane as a helical segment; that stretch reads LTRFYIFLVFCIFFGYLTGRIRV. 288–295 is an ATP binding site; it reads GPPGTGKT. Histidine 509 is a binding site for Zn(2+). Glutamate 510 is a catalytic residue. The Zn(2+) site is built by histidine 513 and aspartate 587.

In the N-terminal section; belongs to the AAA ATPase family. The protein in the C-terminal section; belongs to the peptidase M41 family. Requires Zn(2+) as cofactor.

It is found in the mitochondrion inner membrane. The protein resides in the mitochondrion. Functionally, ATP-dependent metalloprotease that catalyzes the degradation of folded and unfolded proteins with a suitable degron sequence in the mitochondrial intermembrane region. Plays an important role in regulating mitochondrial morphology and function. In Caenorhabditis elegans, this protein is ATP-dependent zinc metalloprotease YME1 homolog (ymel-1).